The sequence spans 240 residues: B-cell receptor-associated protein 29 (240 aa).

At 1–6 the chain is on the lumenal side; that stretch reads MTLQWT. The helical transmembrane segment at 7–27 threads the bilayer; the sequence is AVATFLYAEIGLILIFCLPFI. The Cytoplasmic portion of the chain corresponds to 28–43; that stretch reads PPQRWQKIFSFSVWGK. The chain crosses the membrane as a helical span at residues 44-64; that stretch reads IASFWNKAFLTIIILLIVLFL. Residues 65–103 are Lumenal-facing; the sequence is DAVREVRKYSSTHTIEKSSASRPAAYEHTQMKLFRSQRN. Residues 104 to 124 traverse the membrane as a helical segment; sequence LYISGFSLFFWLVLRRLVTLI. The Cytoplasmic portion of the chain corresponds to 125–240; sequence TQLAKELSHK…DRAGKDKKCL (116 aa). A coiled-coil region spans residues 166–233; the sequence is GKEEEHILEA…REHSELQDRA (68 aa). The short motif at 237–240 is the Di-lysine motif element; that stretch reads KKCL.

The protein belongs to the BCAP29/BCAP31 family. As to quaternary structure, homodimer and heterodimer with BCAP31. Binds CASP8 as a complex containing BCAP31, BCAP29, BCL2 and/or BCL2L1. Interacts with VAMP3, VAMP1 and membrane IgD immunoglobulins. May interact with ACTG1 and non-muscle myosin II.

The protein localises to the endoplasmic reticulum membrane. Its function is as follows. May play a role in anterograde transport of membrane proteins from the endoplasmic reticulum to the Golgi. May be involved in CASP8-mediated apoptosis. The polypeptide is B-cell receptor-associated protein 29 (BCAP29) (Bos taurus (Bovine)).